The primary structure comprises 300 residues: Ribosomal RNA small subunit methyltransferase H (300 aa).

Residues 46–48 (GGH), Asp-65, Phe-92, Asp-107, and Gln-114 contribute to the S-adenosyl-L-methionine site.

It belongs to the methyltransferase superfamily. RsmH family.

The protein resides in the cytoplasm. It carries out the reaction cytidine(1402) in 16S rRNA + S-adenosyl-L-methionine = N(4)-methylcytidine(1402) in 16S rRNA + S-adenosyl-L-homocysteine + H(+). Its function is as follows. Specifically methylates the N4 position of cytidine in position 1402 (C1402) of 16S rRNA. This is Ribosomal RNA small subunit methyltransferase H from Prochlorococcus marinus (strain MIT 9312).